The following is a 304-amino-acid chain: Small ribosomal subunit biogenesis GTPase RsgA (304 aa).

The CP-type G domain maps to 78–237; sequence VSFLTRPPVA…VADTPGFNRP (160 aa). GTP contacts are provided by residues 127–130 and 179–187; these read TKTD and GPSGVGKSS. Residues Cys-262, Cys-267, His-269, and Cys-275 each coordinate Zn(2+).

The protein belongs to the TRAFAC class YlqF/YawG GTPase family. RsgA subfamily. As to quaternary structure, monomer. Associates with 30S ribosomal subunit, binds 16S rRNA. It depends on Zn(2+) as a cofactor.

The protein resides in the cytoplasm. In terms of biological role, one of several proteins that assist in the late maturation steps of the functional core of the 30S ribosomal subunit. Helps release RbfA from mature subunits. May play a role in the assembly of ribosomal proteins into the subunit. Circularly permuted GTPase that catalyzes slow GTP hydrolysis, GTPase activity is stimulated by the 30S ribosomal subunit. The sequence is that of Small ribosomal subunit biogenesis GTPase RsgA from Synechococcus sp. (strain CC9311).